The sequence spans 379 residues: Cytochrome b (379 aa).

Transmembrane regions (helical) follow at residues 33-53, 77-98, 113-133, and 178-198; these read FGSL…FLAM, WLIR…YLHI, WNIG…GYVL, and FFAF…LHLL. His-83 and His-97 together coordinate heme b. Residues His-182 and His-196 each contribute to the heme b site. His-201 is an a ubiquinone binding site. Transmembrane regions (helical) follow at residues 226-246, 288-308, 320-340, and 347-367; these read YKDL…ALFY, LGGV…PILH, ASQL…WIGG, and YIII…VLNP.

It belongs to the cytochrome b family. The cytochrome bc1 complex contains 3 respiratory subunits (MT-CYB, CYC1 and UQCRFS1), 2 core proteins (UQCRC1 and UQCRC2) and probably 6 low-molecular weight proteins. Heme b is required as a cofactor.

It localises to the mitochondrion inner membrane. Its function is as follows. Component of the ubiquinol-cytochrome c reductase complex (complex III or cytochrome b-c1 complex) that is part of the mitochondrial respiratory chain. The b-c1 complex mediates electron transfer from ubiquinol to cytochrome c. Contributes to the generation of a proton gradient across the mitochondrial membrane that is then used for ATP synthesis. The chain is Cytochrome b (mt-cyb) from Anguilla rostrata (American eel).